The sequence spans 265 residues: Orotidine 5'-phosphate decarboxylase (265 aa).

Substrate contacts are provided by residues Asp-37, Lys-59–His-61, Asp-91–Thr-100, Tyr-217, and Arg-235. Lys-93 serves as the catalytic Proton donor.

This sequence belongs to the OMP decarboxylase family.

The catalysed reaction is orotidine 5'-phosphate + H(+) = UMP + CO2. The protein operates within pyrimidine metabolism; UMP biosynthesis via de novo pathway; UMP from orotate: step 2/2. The chain is Orotidine 5'-phosphate decarboxylase (URA3) from Candida glabrata (strain ATCC 2001 / BCRC 20586 / JCM 3761 / NBRC 0622 / NRRL Y-65 / CBS 138) (Yeast).